The sequence spans 555 residues: Dihydroxy-acid dehydratase (555 aa).

[2Fe-2S] cluster is bound at residue Cys-46. Mg(2+) is bound at residue Asp-78. Cys-119 serves as a coordination point for [2Fe-2S] cluster. Mg(2+) is bound by residues Asp-120 and Lys-121. Position 121 is an N6-carboxylysine (Lys-121). Cys-191 contributes to the [2Fe-2S] cluster binding site. Glu-442 serves as a coordination point for Mg(2+). Ser-468 (proton acceptor) is an active-site residue.

This sequence belongs to the IlvD/Edd family. As to quaternary structure, homodimer. [2Fe-2S] cluster is required as a cofactor. It depends on Mg(2+) as a cofactor.

It carries out the reaction (2R)-2,3-dihydroxy-3-methylbutanoate = 3-methyl-2-oxobutanoate + H2O. The catalysed reaction is (2R,3R)-2,3-dihydroxy-3-methylpentanoate = (S)-3-methyl-2-oxopentanoate + H2O. Its pathway is amino-acid biosynthesis; L-isoleucine biosynthesis; L-isoleucine from 2-oxobutanoate: step 3/4. It functions in the pathway amino-acid biosynthesis; L-valine biosynthesis; L-valine from pyruvate: step 3/4. Its function is as follows. Functions in the biosynthesis of branched-chain amino acids. Catalyzes the dehydration of (2R,3R)-2,3-dihydroxy-3-methylpentanoate (2,3-dihydroxy-3-methylvalerate) into 2-oxo-3-methylpentanoate (2-oxo-3-methylvalerate) and of (2R)-2,3-dihydroxy-3-methylbutanoate (2,3-dihydroxyisovalerate) into 2-oxo-3-methylbutanoate (2-oxoisovalerate), the penultimate precursor to L-isoleucine and L-valine, respectively. This chain is Dihydroxy-acid dehydratase, found in Thermus thermophilus (strain ATCC BAA-163 / DSM 7039 / HB27).